We begin with the raw amino-acid sequence, 194 residues long: Protein GrpE (194 aa).

A compositionally biased stretch (basic and acidic residues) spans 1-12 (MNKQKNNRERTP). The segment at 1–44 (MNKQKNNRERTPQPEQDTERDEQLTNSHENDIDSAPAAEENDKV) is disordered.

It belongs to the GrpE family. As to quaternary structure, homodimer.

Its subcellular location is the cytoplasm. In terms of biological role, participates actively in the response to hyperosmotic and heat shock by preventing the aggregation of stress-denatured proteins, in association with DnaK and GrpE. It is the nucleotide exchange factor for DnaK and may function as a thermosensor. Unfolded proteins bind initially to DnaJ; upon interaction with the DnaJ-bound protein, DnaK hydrolyzes its bound ATP, resulting in the formation of a stable complex. GrpE releases ADP from DnaK; ATP binding to DnaK triggers the release of the substrate protein, thus completing the reaction cycle. Several rounds of ATP-dependent interactions between DnaJ, DnaK and GrpE are required for fully efficient folding. The polypeptide is Protein GrpE (Porphyromonas gingivalis (strain ATCC 33277 / DSM 20709 / CIP 103683 / JCM 12257 / NCTC 11834 / 2561)).